The following is a 275-amino-acid chain: Large ribosomal subunit protein uL2 (275 aa).

The interval 221–275 (VRGVAMNPVDHPMGGGEGKSSGGRHPCSPWGQQSKGVRTRNNKRTDQFIVKRRSK) is disordered.

The protein belongs to the universal ribosomal protein uL2 family. In terms of assembly, part of the 50S ribosomal subunit. Forms a bridge to the 30S subunit in the 70S ribosome.

One of the primary rRNA binding proteins. Required for association of the 30S and 50S subunits to form the 70S ribosome, for tRNA binding and peptide bond formation. It has been suggested to have peptidyltransferase activity; this is somewhat controversial. Makes several contacts with the 16S rRNA in the 70S ribosome. The protein is Large ribosomal subunit protein uL2 of Desulfosudis oleivorans (strain DSM 6200 / JCM 39069 / Hxd3) (Desulfococcus oleovorans).